Reading from the N-terminus, the 392-residue chain is DNA-directed RNA polymerase subunit Rpo1C (392 aa).

This sequence belongs to the RNA polymerase beta' chain family. In terms of assembly, part of the RNA polymerase complex.

It is found in the cytoplasm. The enzyme catalyses RNA(n) + a ribonucleoside 5'-triphosphate = RNA(n+1) + diphosphate. Its function is as follows. DNA-dependent RNA polymerase (RNAP) catalyzes the transcription of DNA into RNA using the four ribonucleoside triphosphates as substrates. Forms part of the jaw domain. This Sulfurisphaera tokodaii (strain DSM 16993 / JCM 10545 / NBRC 100140 / 7) (Sulfolobus tokodaii) protein is DNA-directed RNA polymerase subunit Rpo1C.